The sequence spans 1024 residues: Beta-galactosidase (1024 aa).

Residues Asn103 and Asp202 each contribute to the substrate site. Asp202 lines the Na(+) pocket. Positions 417, 419, and 462 each coordinate Mg(2+). Substrate-binding positions include Glu462 and 538-541 (EYAH). Glu462 functions as the Proton donor in the catalytic mechanism. The active-site Nucleophile is the Glu538. Residue Asn598 participates in Mg(2+) binding. Na(+) is bound by residues Phe602 and Asn605. Asn605 and Trp1000 together coordinate substrate.

Belongs to the glycosyl hydrolase 2 family. As to quaternary structure, homotetramer. Mg(2+) serves as cofactor. Requires Na(+) as cofactor.

It carries out the reaction Hydrolysis of terminal non-reducing beta-D-galactose residues in beta-D-galactosides.. This Escherichia coli O139:H28 (strain E24377A / ETEC) protein is Beta-galactosidase.